Reading from the N-terminus, the 207-residue chain is Ubiquitin-conjugating enzyme E2 E3 (207 aa).

Residues 1 to 10 (MSSDRQRSDD) are compositionally biased toward basic and acidic residues. The disordered stretch occupies residues 1–63 (MSSDRQRSDD…KTTAKLSTSA (63 aa)). Serine 2 is subject to N-acetylserine. Position 8 is a phosphoserine (serine 8). Over residues 50–63 (KLSSKTTAKLSTSA) the composition is skewed to low complexity. The UBC core domain occupies 61 to 207 (TSAKRIQKEL…ARQWTKRYAT (147 aa)). Catalysis depends on cysteine 145, which acts as the Glycyl thioester intermediate.

The protein belongs to the ubiquitin-conjugating enzyme family. As to quaternary structure, the ubiquitin-loaded form interacts specifically with importin-11 (IPO11), leading to its import into the nucleus. Interacts with NEDD4L.

The protein localises to the nucleus. It localises to the cytoplasm. It carries out the reaction S-ubiquitinyl-[E1 ubiquitin-activating enzyme]-L-cysteine + [E2 ubiquitin-conjugating enzyme]-L-cysteine = [E1 ubiquitin-activating enzyme]-L-cysteine + S-ubiquitinyl-[E2 ubiquitin-conjugating enzyme]-L-cysteine.. Its pathway is protein modification; protein ubiquitination. Accepts ubiquitin from the E1 complex and catalyzes its covalent attachment to other proteins. In vitro catalyzes 'Lys-11'- and 'Lys-48'-, as well as 'Lys-63'-linked polyubiquitination. Participates in the regulation of transepithelial sodium transport in renal cells. The polypeptide is Ubiquitin-conjugating enzyme E2 E3 (UBE2E3) (Bos taurus (Bovine)).